The chain runs to 253 residues: E3 ubiquitin-protein ligase MARCHF3 (253 aa).

Residues 63-123 (SPFNDRPMCR…ELCHFRFAVE (61 aa)) form an RING-CH-type zinc finger. The Zn(2+) site is built by Cys-71, Cys-74, Cys-87, Cys-89, His-97, Cys-100, Cys-113, and Cys-116. Transmembrane regions (helical) follow at residues 145–165 (LFGD…SGWL) and 182–202 (AVGL…WTLV). A phosphoserine mark is found at Ser-237 and Ser-243.

Interacts with MARCHF2 and STX6.

The protein resides in the cytoplasmic vesicle membrane. Its subcellular location is the early endosome membrane. The catalysed reaction is S-ubiquitinyl-[E2 ubiquitin-conjugating enzyme]-L-cysteine + [acceptor protein]-L-lysine = [E2 ubiquitin-conjugating enzyme]-L-cysteine + N(6)-ubiquitinyl-[acceptor protein]-L-lysine.. The protein operates within protein modification; protein ubiquitination. E3 ubiquitin-protein ligase which may be involved in endosomal trafficking. E3 ubiquitin ligases accept ubiquitin from an E2 ubiquitin-conjugating enzyme in the form of a thioester and then directly transfer the ubiquitin to targeted substrates. This Bos taurus (Bovine) protein is E3 ubiquitin-protein ligase MARCHF3 (MARCHF3).